The sequence spans 471 residues: Putative multidrug resistance protein MdtD (471 aa).

At 1 to 11 (MTDLPDSTRWQ) the chain is on the periplasmic side. The chain crosses the membrane as a helical span at residues 12 to 32 (LWIVAFGFFMQSLDTTIVNTA). Residues 33 to 48 (LPSMAQSLGESPLHMH) are Cytoplasmic-facing. A helical membrane pass occupies residues 49–69 (MVIVSYVLTVAVMLPASGWLA). Over 70 to 76 (DKVGVRN) the chain is Periplasmic. The chain crosses the membrane as a helical span at residues 77–97 (IFFTAIVLFTLGSLFCALSGT). The Cytoplasmic segment spans residues 98–101 (LNEL). Residues 102–124 (LLARALQGVGGAMMVPVGRLTVM) form a helical membrane-spanning segment. Topologically, residues 125 to 137 (KIVPREQYMAAMT) are periplasmic. Residues 138-158 (FVTLPGQIGPLLGPALGGLLV) traverse the membrane as a helical segment. The Cytoplasmic segment spans residues 159–164 (EYASWH). The helical transmembrane segment at 165 to 185 (WIFLINIPVGIIGAITTLMLM) threads the bilayer. The Periplasmic portion of the chain corresponds to 186–196 (PNYTMQTRRFD). Residues 197 to 217 (LSGFLLLAVGMAVLTLALDGS) form a helical membrane-spanning segment. Residues 218–224 (KGTGFSP) lie on the Cytoplasmic side of the membrane. The chain crosses the membrane as a helical span at residues 225–245 (LAIAGLVAVGVVALVLYLLHA). Residues 246–262 (QNNNRALFSLKLFRTRT) are Periplasmic-facing. The helical transmembrane segment at 263 to 283 (FSLGLAGSFAGRIGSGMLPFM) threads the bilayer. Topologically, residues 284-285 (TP) are cytoplasmic. The helical transmembrane segment at 286–306 (VFLQIGFGFSPFHAGLMMIPM) threads the bilayer. Topologically, residues 307–341 (VLGSMGMKRIVVQVVNRFGYRRVLVATTLGLSLVT) are periplasmic. A helical transmembrane segment spans residues 342–362 (LLFMTTALLGWYYVLPFVLFL). At 363–395 (QGMVNSTRFSSMNTLTLKDLPDNLASSGNSLLS) the chain is on the cytoplasmic side. Residues 396–416 (MIMQLSMSIGVTIAGLLLGLF) form a helical membrane-spanning segment. The Periplasmic segment spans residues 417–430 (GSQHVSVDSGTTQT). Residues 431–451 (VFMYTWLSMASIIALPAFIFA) traverse the membrane as a helical segment. Over 452–471 (RVPNDTHQNVAISRRKRSAQ) the chain is Cytoplasmic.

This sequence belongs to the major facilitator superfamily. TCR/Tet family.

The protein resides in the cell inner membrane. This is Putative multidrug resistance protein MdtD from Escherichia coli O6:H1 (strain CFT073 / ATCC 700928 / UPEC).